A 420-amino-acid polypeptide reads, in one-letter code: Glutamyl-tRNA reductase (420 aa).

Residues 49–52 (TCNR), S107, 112–114 (EPQ), and Q118 each bind substrate. The Nucleophile role is filled by C50. Residue 187-192 (GAGETI) participates in NADP(+) binding.

This sequence belongs to the glutamyl-tRNA reductase family. Homodimer.

The catalysed reaction is (S)-4-amino-5-oxopentanoate + tRNA(Glu) + NADP(+) = L-glutamyl-tRNA(Glu) + NADPH + H(+). The protein operates within porphyrin-containing compound metabolism; protoporphyrin-IX biosynthesis; 5-aminolevulinate from L-glutamyl-tRNA(Glu): step 1/2. Functionally, catalyzes the NADPH-dependent reduction of glutamyl-tRNA(Glu) to glutamate 1-semialdehyde (GSA). In Nitrosococcus oceani (strain ATCC 19707 / BCRC 17464 / JCM 30415 / NCIMB 11848 / C-107), this protein is Glutamyl-tRNA reductase.